Here is a 997-residue protein sequence, read N- to C-terminus: P3N-PIPO polyprotein (997 aa).

The Peptidase S30 domain maps to 173 to 313 (IVCVDDVNNL…VLFYSDVEHY (141 aa)). Catalysis depends on for P1 proteinase activity residues glutamate 235 and serine 267. Positions 365–368 (KLSC) match the Involved in interaction with stylet and aphid transmission motif. The short motif at 621-623 (PTK) is the Involved in virions binding and aphid transmission element. The Peptidase C6 domain occupies 647–769 (MYIAKEGYCY…QSEMKHYRVG (123 aa)). Catalysis depends on for helper component proteinase activity residues cysteine 655 and histidine 728.

This sequence belongs to the potyviridae P3N-PIPO polyprotein family. In terms of assembly, interacts (via PIPO domain) with host PCaP1 protein; this interaction may help to anchor the movement complex to the plasma membrane from which the complex could move to the plasmodesmata. Potyviral RNA is expressed as two polyproteins which undergo post-translational proteolytic processing. Genome polyprotein is processed by NIa-pro, P1 and HC-pro proteinases resulting in the production of at least ten individual proteins. P3N-PIPO is cleaved by P1 and HC-pro proteinases resulting in the production of three individual proteins. The P1 proteinase and the HC-pro cleave only their respective C-termini autocatalytically.

The protein resides in the host cell junction. It is found in the host plasmodesma. The enzyme catalyses Hydrolyzes a Gly-|-Gly bond at its own C-terminus, commonly in the sequence -Tyr-Xaa-Val-Gly-|-Gly, in the processing of the potyviral polyprotein.. In terms of biological role, required for aphid transmission and also has proteolytic activity. Only cleaves a Gly-Gly dipeptide at its own C-terminus. Interacts with virions and aphid stylets. Acts as a suppressor of RNA-mediated gene silencing, also known as post-transcriptional gene silencing (PTGS), a mechanism of plant viral defense that limits the accumulation of viral RNAs. May have RNA-binding activity. Allows efficient cell to cell propagation, by bypassing the host cell wall barrier. Transports viral genome to neighboring plant cells directly through plasmosdesmata, without any budding. In Citrullus lanatus (Watermelon), this protein is P3N-PIPO polyprotein.